We begin with the raw amino-acid sequence, 115 residues long: Large ribosomal subunit protein uL24 (115 aa).

This sequence belongs to the universal ribosomal protein uL24 family. In terms of assembly, part of the 50S ribosomal subunit.

In terms of biological role, one of two assembly initiator proteins, it binds directly to the 5'-end of the 23S rRNA, where it nucleates assembly of the 50S subunit. Functionally, one of the proteins that surrounds the polypeptide exit tunnel on the outside of the subunit. This chain is Large ribosomal subunit protein uL24, found in Acaryochloris marina (strain MBIC 11017).